Reading from the N-terminus, the 213-residue chain is Glycerol-3-phosphate acyltransferase (213 aa).

6 helical membrane passes run 3 to 23, 55 to 75, 80 to 100, 110 to 130, 142 to 162, and 163 to 183; these read ILLL…LWIG, ITFL…IWLG, SPLI…FTGF, AGVL…VFAL, SITA…IHFL, and LDGY…VIIF.

This sequence belongs to the PlsY family. Probably interacts with PlsX.

It is found in the cell membrane. The enzyme catalyses an acyl phosphate + sn-glycerol 3-phosphate = a 1-acyl-sn-glycero-3-phosphate + phosphate. The protein operates within lipid metabolism; phospholipid metabolism. Functionally, catalyzes the transfer of an acyl group from acyl-phosphate (acyl-PO(4)) to glycerol-3-phosphate (G3P) to form lysophosphatidic acid (LPA). This enzyme utilizes acyl-phosphate as fatty acyl donor, but not acyl-CoA or acyl-ACP. The polypeptide is Glycerol-3-phosphate acyltransferase (Streptococcus thermophilus (strain CNRZ 1066)).